A 138-amino-acid polypeptide reads, in one-letter code: ATP synthase epsilon chain (138 aa).

Belongs to the ATPase epsilon chain family. In terms of assembly, F-type ATPases have 2 components, CF(1) - the catalytic core - and CF(0) - the membrane proton channel. CF(1) has five subunits: alpha(3), beta(3), gamma(1), delta(1), epsilon(1). CF(0) has three main subunits: a, b and c.

The protein resides in the cell membrane. Its function is as follows. Produces ATP from ADP in the presence of a proton gradient across the membrane. The polypeptide is ATP synthase epsilon chain (atpC) (Buchnera aphidicola subsp. Acyrthosiphon pisum (strain APS) (Acyrthosiphon pisum symbiotic bacterium)).